Reading from the N-terminus, the 488-residue chain is Glutamyl-tRNA(Gln) amidotransferase subunit A (488 aa).

Catalysis depends on charge relay system residues Lys77 and Ser152. The active-site Acyl-ester intermediate is Ser176.

Belongs to the amidase family. GatA subfamily. Heterotrimer of A, B and C subunits.

The enzyme catalyses L-glutamyl-tRNA(Gln) + L-glutamine + ATP + H2O = L-glutaminyl-tRNA(Gln) + L-glutamate + ADP + phosphate + H(+). In terms of biological role, allows the formation of correctly charged Gln-tRNA(Gln) through the transamidation of misacylated Glu-tRNA(Gln) in organisms which lack glutaminyl-tRNA synthetase. The reaction takes place in the presence of glutamine and ATP through an activated gamma-phospho-Glu-tRNA(Gln). The polypeptide is Glutamyl-tRNA(Gln) amidotransferase subunit A (Streptococcus pyogenes serotype M18 (strain MGAS8232)).